The primary structure comprises 341 residues: GTP-binding protein REM 2 (341 aa).

Over residues 1–13 (MHTDLDTDMDADT) the composition is skewed to acidic residues. Disordered stretches follow at residues 1–72 (MHTD…SMPV) and 84–106 (VDEL…GSGE). A compositionally biased stretch (polar residues) spans 18–32 (LCSSSSRQASPSGTP). Phosphoserine is present on Ser-27. Residues 43–54 (QKPEKLLAELDR) show a composition bias toward basic and acidic residues. The span at 94-105 (SSSGSSDSLGSG) shows a compositional bias: low complexity. GTP-binding positions include 122-129 (GESGVGKS), 230-233 (NKSD), and 261-262 (AA). Residues 282–309 (RGRGHAGGQRPEPSSPDGPAPPTRRESL) are disordered. The span at 294–303 (PSSPDGPAPP) shows a compositional bias: pro residues. Ser-296 is modified (phosphoserine).

It belongs to the small GTPase superfamily. RGK family. As to expression, expressed in brain and kidney.

The protein localises to the cell membrane. In terms of biological role, binds GTP saturably and exhibits a low intrinsic rate of GTP hydrolysis. The polypeptide is GTP-binding protein REM 2 (Rem2) (Rattus norvegicus (Rat)).